The sequence spans 213 residues: Small ribosomal subunit protein uS3 (213 aa).

In terms of domain architecture, KH type-2 spans 38 to 106; sequence IRKYVKKTLY…EFSIEVNEIR (69 aa).

The protein belongs to the universal ribosomal protein uS3 family. Part of the 30S ribosomal subunit. Forms a tight complex with proteins S10 and S14.

Its function is as follows. Binds the lower part of the 30S subunit head. Binds mRNA in the 70S ribosome, positioning it for translation. The sequence is that of Small ribosomal subunit protein uS3 from Oleidesulfovibrio alaskensis (strain ATCC BAA-1058 / DSM 17464 / G20) (Desulfovibrio alaskensis).